Reading from the N-terminus, the 104-residue chain is Nucleoid-associated protein jk2011 (104 aa).

Belongs to the YbaB/EbfC family. As to quaternary structure, homodimer.

Its subcellular location is the cytoplasm. The protein resides in the nucleoid. Its function is as follows. Binds to DNA and alters its conformation. May be involved in regulation of gene expression, nucleoid organization and DNA protection. This Corynebacterium jeikeium (strain K411) protein is Nucleoid-associated protein jk2011.